Reading from the N-terminus, the 649-residue chain is tRNA-guanine(15) transglycosylase (649 aa).

Asp88 serves as the catalytic Nucleophile. The substrate site is built by Asp123 and Ala194. Residues Cys280, Cys282, and Cys285 each contribute to the Zn(2+) site. A PUA domain is found at 573–648 (KYRIVIDSSV…VAVTLRGGLK (76 aa)).

The protein belongs to the archaeosine tRNA-ribosyltransferase family. Zn(2+) is required as a cofactor.

It catalyses the reaction guanosine(15) in tRNA + 7-cyano-7-deazaguanine = 7-cyano-7-carbaguanosine(15) in tRNA + guanine. The protein operates within tRNA modification; archaeosine-tRNA biosynthesis. Its function is as follows. Exchanges the guanine residue with 7-cyano-7-deazaguanine (preQ0) at position 15 in the dihydrouridine loop (D-loop) of archaeal tRNAs. This Methanococcus maripaludis (strain C7 / ATCC BAA-1331) protein is tRNA-guanine(15) transglycosylase.